Reading from the N-terminus, the 361-residue chain is Peptide chain release factor 1 (361 aa).

N5-methylglutamine is present on Q235.

This sequence belongs to the prokaryotic/mitochondrial release factor family. Post-translationally, methylated by PrmC. Methylation increases the termination efficiency of RF1.

It is found in the cytoplasm. In terms of biological role, peptide chain release factor 1 directs the termination of translation in response to the peptide chain termination codons UAG and UAA. This chain is Peptide chain release factor 1, found in Xanthomonas campestris pv. campestris (strain B100).